We begin with the raw amino-acid sequence, 255 residues long: Electron transfer flavoprotein beta subunit lysine methyltransferase (255 aa).

Residues 1 to 32 (MAFSLCWKAPRSPWSFLQAVNNGSPLFLWRTV) constitute a mitochondrion transit peptide.

This sequence belongs to the methyltransferase superfamily. ETFBKMT family. In terms of assembly, interacts with HSPD1; this protein may possibly be a methylation substrate.

It localises to the cytoplasm. Its subcellular location is the mitochondrion matrix. The enzyme catalyses L-lysyl-[protein] + 3 S-adenosyl-L-methionine = N(6),N(6),N(6)-trimethyl-L-lysyl-[protein] + 3 S-adenosyl-L-homocysteine + 3 H(+). Protein-lysine methyltransferase that selectively trimethylates the flavoprotein ETFB in mitochondria. Thereby, may negatively regulate the function of ETFB in electron transfer from Acyl-CoA dehydrogenases. This is Electron transfer flavoprotein beta subunit lysine methyltransferase from Mus musculus (Mouse).